Consider the following 419-residue polypeptide: UDP-N-acetylglucosamine 1-carboxyvinyltransferase (419 aa).

Residue 22–23 (KN) coordinates phosphoenolpyruvate. R91 contacts UDP-N-acetyl-alpha-D-glucosamine. C115 (proton donor) is an active-site residue. The residue at position 115 (C115) is a 2-(S-cysteinyl)pyruvic acid O-phosphothioketal. Residues 120–124 (RPVDL), 160–163 (KVSV), D305, and V327 contribute to the UDP-N-acetyl-alpha-D-glucosamine site.

Belongs to the EPSP synthase family. MurA subfamily.

The protein localises to the cytoplasm. It catalyses the reaction phosphoenolpyruvate + UDP-N-acetyl-alpha-D-glucosamine = UDP-N-acetyl-3-O-(1-carboxyvinyl)-alpha-D-glucosamine + phosphate. It participates in cell wall biogenesis; peptidoglycan biosynthesis. Cell wall formation. Adds enolpyruvyl to UDP-N-acetylglucosamine. In Shigella boydii serotype 18 (strain CDC 3083-94 / BS512), this protein is UDP-N-acetylglucosamine 1-carboxyvinyltransferase.